The sequence spans 248 residues: Probable transcriptional regulatory protein RHE_CH03475 (248 aa).

The protein belongs to the TACO1 family.

The protein resides in the cytoplasm. This chain is Probable transcriptional regulatory protein RHE_CH03475, found in Rhizobium etli (strain ATCC 51251 / DSM 11541 / JCM 21823 / NBRC 15573 / CFN 42).